Here is a 247-residue protein sequence, read N- to C-terminus: tRNA (guanine-N(7)-)-methyltransferase (247 aa).

S-adenosyl-L-methionine is bound by residues Gly70, 93 to 94, 128 to 129, and Leu148; these read EI and NA. Residue Asp151 is part of the active site. 226 to 228 contributes to the S-adenosyl-L-methionine binding site; sequence SEE.

Belongs to the class I-like SAM-binding methyltransferase superfamily. TrmB family.

Its subcellular location is the nucleus. The enzyme catalyses guanosine(46) in tRNA + S-adenosyl-L-methionine = N(7)-methylguanosine(46) in tRNA + S-adenosyl-L-homocysteine. Its pathway is tRNA modification; N(7)-methylguanine-tRNA biosynthesis. Its function is as follows. Catalyzes the formation of N(7)-methylguanine at position 46 (m7G46) in tRNA. This Drosophila virilis (Fruit fly) protein is tRNA (guanine-N(7)-)-methyltransferase.